The primary structure comprises 72 residues: UPF0729 protein C18orf32 homolog (72 aa).

A necessary for its localzation to the endoplasmic reticulum and lipid droplets region spans residues 1-33 (MVCIPCIVIPVLLWIFKKFLEPYIYPVVSRIWP). Residues 36–72 (AVQQSGDKNMSKVDCKGAGTNGLPTKGPTEVSDKKKD) are disordered.

This sequence belongs to the UPF0729 family. Interacts with DERL1 and AMFR. Undergoes ER-associated degradation (ERAD).

Its subcellular location is the endoplasmic reticulum. The protein resides in the lipid droplet. Functionally, may activate the NF-kappa-B signaling pathway. The polypeptide is UPF0729 protein C18orf32 homolog (Mus musculus (Mouse)).